A 549-amino-acid chain; its full sequence is Chaperonin GroEL 2 (549 aa).

ATP is bound by residues 30-33 (TLGP), K51, 87-91 (DGTTT), G415, 479-481 (NAA), and D495.

It belongs to the chaperonin (HSP60) family. In terms of assembly, forms a cylinder of 14 subunits composed of two heptameric rings stacked back-to-back. Interacts with the co-chaperonin GroES.

Its subcellular location is the cytoplasm. It carries out the reaction ATP + H2O + a folded polypeptide = ADP + phosphate + an unfolded polypeptide.. In terms of biological role, together with its co-chaperonin GroES, plays an essential role in assisting protein folding. The GroEL-GroES system forms a nano-cage that allows encapsulation of the non-native substrate proteins and provides a physical environment optimized to promote and accelerate protein folding. This chain is Chaperonin GroEL 2, found in Polaromonas naphthalenivorans (strain CJ2).